Here is a 78-residue protein sequence, read N- to C-terminus: PFVITSPCIGEKAADCVETCPVDAIHEGPDQYYIDPDLCIDCAACEPVCPVNAIYQEEFVPEDEKEFIEKNRNFFRNR.

2 consecutive 4Fe-4S ferredoxin-type domains span residues 2 to 29 (FVITSPCIGEKAADCVETCPVDAIHEGP) and 30 to 59 (DQYYIDPDLCIDCAACEPVCPVNAIYQEEF). [3Fe-4S] cluster contacts are provided by C8 and C16. Residues C20, C39, C42, and C45 each coordinate [4Fe-4S] cluster. Position 49 (C49) interacts with [3Fe-4S] cluster.

It depends on [3Fe-4S] cluster as a cofactor. Requires [4Fe-4S] cluster as cofactor.

In terms of biological role, ferredoxins are iron-sulfur proteins that transfer electrons in a wide variety of metabolic reactions. The sequence is that of Ferredoxin from Alicyclobacillus acidocaldarius subsp. acidocaldarius (Bacillus acidocaldarius).